The primary structure comprises 177 residues: ATP synthase subunit delta (177 aa).

It belongs to the ATPase delta chain family. As to quaternary structure, F-type ATPases have 2 components, F(1) - the catalytic core - and F(0) - the membrane proton channel. F(1) has five subunits: alpha(3), beta(3), gamma(1), delta(1), epsilon(1). F(0) has three main subunits: a(1), b(2) and c(10-14). The alpha and beta chains form an alternating ring which encloses part of the gamma chain. F(1) is attached to F(0) by a central stalk formed by the gamma and epsilon chains, while a peripheral stalk is formed by the delta and b chains.

The protein localises to the cell inner membrane. In terms of biological role, f(1)F(0) ATP synthase produces ATP from ADP in the presence of a proton or sodium gradient. F-type ATPases consist of two structural domains, F(1) containing the extramembraneous catalytic core and F(0) containing the membrane proton channel, linked together by a central stalk and a peripheral stalk. During catalysis, ATP synthesis in the catalytic domain of F(1) is coupled via a rotary mechanism of the central stalk subunits to proton translocation. Its function is as follows. This protein is part of the stalk that links CF(0) to CF(1). It either transmits conformational changes from CF(0) to CF(1) or is implicated in proton conduction. The polypeptide is ATP synthase subunit delta (Haemophilus influenzae (strain PittEE)).